The sequence spans 172 residues: Myosin regulatory light chain 12B (172 aa).

The span at 1-16 (MSSKKAKTKTTKKRPQ) shows a compositional bias: basic residues. Residues 1–20 (MSSKKAKTKTTKKRPQRATS) form a disordered region. Threonine 19 is modified (phosphothreonine; by MLCK and ZIPK/DAPK3). Serine 20 bears the Phosphoserine; by MLCK and ZIPK/DAPK3 mark. EF-hand domains follow at residues 29–64 (SQIQ…LGKN), 98–133 (DPED…MGDR), and 134–169 (FTDE…GAKD). Ca(2+) is bound by residues aspartate 42, asparagine 44, aspartate 46, and aspartate 53.

Myosin is a hexamer of 2 heavy chains and 4 light chains: interacts with myosin heavy chain MYO19. Post-translationally, phosphorylation increases the actin-activated myosin ATPase activity and thereby regulates the contractile activity. It is required to generate the driving force in the migration of the cells but not necessary for localization of myosin-2 at the leading edge. Phosphorylation is reduced following epigallocatechin-3-O-gallate treatment.

Myosin regulatory subunit that plays an important role in regulation of both smooth muscle and nonmuscle cell contractile activity via its phosphorylation. Phosphorylation triggers actin polymerization in vascular smooth muscle. Implicated in cytokinesis, receptor capping, and cell locomotion. This is Myosin regulatory light chain 12B (Myl12b) from Rattus norvegicus (Rat).